The sequence spans 237 residues: Methylosome subunit pICln (237 aa).

Position 2 is an N-acetylserine (S2). S102, S144, S193, S195, S198, and S210 each carry phosphoserine. The segment at 135-159 is disordered; that stretch reads LHPDPEDEDSDDYDGEEYDVEAHEQ. Acidic residues predominate over residues 139 to 153; the sequence is PEDEDSDDYDGEEYD. Phosphothreonine is present on T223.

It belongs to the pICln (TC 1.A.47) family. In terms of assembly, component of the methylosome, a 20S complex containing at least PRMT5/SKB1, WDR77/MEP50 and CLNS1A/pICln. May mediate SNRPD1 and SNRPD3 methylation. Forms a 6S pICln-Sm complex composed of CLNS1A/pICln, SNRPD1, SNRPD2, SNRPE, SNRPF and SNRPG; ring-like structure where CLNS1A/pICln mimics additional Sm proteins and which is unable to assemble into the core snRNP. Interacts with LSM10 and LSM11.

The protein resides in the cytoplasm. It is found in the cytosol. It localises to the nucleus. The protein localises to the cytoskeleton. Its function is as follows. Involved in both the assembly of spliceosomal snRNPs and the methylation of Sm proteins. Chaperone that regulates the assembly of spliceosomal U1, U2, U4 and U5 small nuclear ribonucleoproteins (snRNPs), the building blocks of the spliceosome, and thereby plays an important role in the splicing of cellular pre-mRNAs. Most spliceosomal snRNPs contain a common set of Sm proteins SNRPB, SNRPD1, SNRPD2, SNRPD3, SNRPE, SNRPF and SNRPG that assemble in a heptameric protein ring on the Sm site of the small nuclear RNA to form the core snRNP (Sm core). In the cytosol, the Sm proteins SNRPD1, SNRPD2, SNRPE, SNRPF and SNRPG are trapped in an inactive 6S pICln-Sm complex by the chaperone CLNS1A that controls the assembly of the core snRNP. Dissociation by the SMN complex of CLNS1A from the trapped Sm proteins and their transfer to an SMN-Sm complex triggers the assembly of core snRNPs and their transport to the nucleus. The sequence is that of Methylosome subunit pICln (CLNS1A) from Homo sapiens (Human).